The sequence spans 277 residues: Shikimate dehydrogenase (NADP(+)) (277 aa).

Shikimate-binding positions include 15-17 (SLS) and threonine 62. Lysine 66 acts as the Proton acceptor in catalysis. Asparagine 87 and aspartate 102 together coordinate shikimate. Residues 127-131 (GAGGA), 151-156 (NRTVDK), and isoleucine 219 each bind NADP(+). Residue tyrosine 221 coordinates shikimate. An NADP(+)-binding site is contributed by glycine 242.

Belongs to the shikimate dehydrogenase family. As to quaternary structure, homodimer.

It carries out the reaction shikimate + NADP(+) = 3-dehydroshikimate + NADPH + H(+). It functions in the pathway metabolic intermediate biosynthesis; chorismate biosynthesis; chorismate from D-erythrose 4-phosphate and phosphoenolpyruvate: step 4/7. In terms of biological role, involved in the biosynthesis of the chorismate, which leads to the biosynthesis of aromatic amino acids. Catalyzes the reversible NADPH linked reduction of 3-dehydroshikimate (DHSA) to yield shikimate (SA). The sequence is that of Shikimate dehydrogenase (NADP(+)) from Bacillus cereus (strain 03BB102).